Consider the following 242-residue polypeptide: 3-dehydroquinate dehydratase (242 aa).

3-dehydroquinate is bound by residues E39–R41 and R73. H135 acts as the Proton donor/acceptor in catalysis. K162 acts as the Schiff-base intermediate with substrate in catalysis. Residues R203 and Q228 each contribute to the 3-dehydroquinate site.

Belongs to the type-I 3-dehydroquinase family. As to quaternary structure, homodimer.

The enzyme catalyses 3-dehydroquinate = 3-dehydroshikimate + H2O. The protein operates within metabolic intermediate biosynthesis; chorismate biosynthesis; chorismate from D-erythrose 4-phosphate and phosphoenolpyruvate: step 3/7. Its function is as follows. Involved in the third step of the chorismate pathway, which leads to the biosynthesis of aromatic amino acids. Catalyzes the cis-dehydration of 3-dehydroquinate (DHQ) and introduces the first double bond of the aromatic ring to yield 3-dehydroshikimate. This is 3-dehydroquinate dehydratase from Methanosarcina barkeri (strain Fusaro / DSM 804).